We begin with the raw amino-acid sequence, 341 residues long: Cobalt-precorrin-5B C(1)-methyltransferase (341 aa).

Belongs to the CbiD family.

The enzyme catalyses Co-precorrin-5B + S-adenosyl-L-methionine = Co-precorrin-6A + S-adenosyl-L-homocysteine. Its pathway is cofactor biosynthesis; adenosylcobalamin biosynthesis; cob(II)yrinate a,c-diamide from sirohydrochlorin (anaerobic route): step 6/10. Functionally, catalyzes the methylation of C-1 in cobalt-precorrin-5B to form cobalt-precorrin-6A. This is Cobalt-precorrin-5B C(1)-methyltransferase from Picrophilus torridus (strain ATCC 700027 / DSM 9790 / JCM 10055 / NBRC 100828 / KAW 2/3).